The primary structure comprises 329 residues: Taste receptor type 2 member 102 (329 aa).

Topologically, residues 1–9 are extracellular; it reads MNMESVLHN. The helical transmembrane segment at 10 to 30 threads the bilayer; it reads FATVLIYVEFIFGNLSNGFIV. The Cytoplasmic segment spans residues 31 to 47; that stretch reads LSNFLDWVIKQKLSLID. The chain crosses the membrane as a helical span at residues 48 to 68; that stretch reads KILLTLAISRITLIWEIYAWF. Topologically, residues 69–85 are extracellular; sequence KSLYDPSSFLIGIEFQI. The chain crosses the membrane as a helical span at residues 86–108; it reads IYFSWVLSSHFSLWLATTLSVFY. At 109-129 the chain is on the cytoplasmic side; sequence LLRIANCSWQIFLYLKWRLKQ. Residues 130-150 traverse the membrane as a helical segment; the sequence is LIVGMLLGSLVFLLGNLMQSM. Topologically, residues 151–181 are extracellular; sequence LEERFYQYGRNTSVNTMSNDLAMWTELIFFN. N161 carries an N-linked (GlcNAc...) asparagine glycan. A helical transmembrane segment spans residues 182 to 202; it reads MAMFSVIPFTLALISFLLLIF. The Cytoplasmic segment spans residues 203–231; the sequence is SLWKHLQKMQLISRRHRDPSTKAHMNALR. The helical transmembrane segment at 232-252 threads the bilayer; sequence IMVSFLLLYTMHFLSLLISWI. The Extracellular portion of the chain corresponds to 253-262; that stretch reads AQKHQSELAD. A helical transmembrane segment spans residues 263 to 283; that stretch reads IIGMITELMYPSVHSCILILG. Residues 284-329 are Cytoplasmic-facing; it reads NSKLKQTSLCMLRHLRCRLKGENITIAYSNQITSFCVFCVANKSMR.

The protein belongs to the G-protein coupled receptor T2R family.

Its subcellular location is the membrane. Its function is as follows. Putative taste receptor which may play a role in the perception of bitterness. This is Taste receptor type 2 member 102 from Mus musculus (Mouse).